The sequence spans 219 residues: tRNA (guanine-N(7)-)-methyltransferase (219 aa).

S-adenosyl-L-methionine-binding residues include Glu46, Glu71, Asn100, and Asp122. The active site involves Asp122. Residues Lys126, Asp158, and Thr199–Glu202 each bind substrate.

It belongs to the class I-like SAM-binding methyltransferase superfamily. TrmB family.

The enzyme catalyses guanosine(46) in tRNA + S-adenosyl-L-methionine = N(7)-methylguanosine(46) in tRNA + S-adenosyl-L-homocysteine. Its pathway is tRNA modification; N(7)-methylguanine-tRNA biosynthesis. Catalyzes the formation of N(7)-methylguanine at position 46 (m7G46) in tRNA. The sequence is that of tRNA (guanine-N(7)-)-methyltransferase from Leuconostoc citreum (strain KM20).